A 576-amino-acid chain; its full sequence is 4-alpha-glucanotransferase DPE1, chloroplastic/amyloplastic (576 aa).

A chloroplast-targeting transit peptide spans 1–45 (MSILLRPSSSPSLCSSLKLFRLSSPDSLIDAAVLRNRTKPSQSFR).

Belongs to the disproportionating enzyme family.

It is found in the plastid. The protein resides in the chloroplast. The protein localises to the amyloplast. It carries out the reaction Transfers a segment of a (1-&gt;4)-alpha-D-glucan to a new position in an acceptor, which may be glucose or a (1-&gt;4)-alpha-D-glucan.. In terms of biological role, chloroplastic alpha-glucanotransferase involved in maltotriose metabolism. Probably uses maltotriose as substrate to transfer a maltosyl unit from one molecule to another, resulting in glucose and maltopentaose. The latter can then be further metabolized to maltose and maltotriose by beta-amylase. Required for normal starch degradation in leaves. This is 4-alpha-glucanotransferase DPE1, chloroplastic/amyloplastic (DPE1) from Arabidopsis thaliana (Mouse-ear cress).